Reading from the N-terminus, the 306-residue chain is Acetyl-coenzyme A carboxylase carboxyl transferase subunit beta (306 aa).

The region spanning 25–294 (LWIKDPTSGE…APEPSHAFSK (270 aa)) is the CoA carboxyltransferase N-terminal domain. The tract at residues 287-306 (EPSHAFSKDSQTQISKTKAA) is disordered. Positions 294-306 (KDSQTQISKTKAA) are enriched in polar residues.

Belongs to the AccD/PCCB family. As to quaternary structure, acetyl-CoA carboxylase is a heterohexamer composed of biotin carboxyl carrier protein (AccB), biotin carboxylase (AccC) and two subunits each of ACCase subunit alpha (AccA) and ACCase subunit beta (AccD).

It is found in the cytoplasm. The catalysed reaction is N(6)-carboxybiotinyl-L-lysyl-[protein] + acetyl-CoA = N(6)-biotinyl-L-lysyl-[protein] + malonyl-CoA. Its pathway is lipid metabolism; malonyl-CoA biosynthesis; malonyl-CoA from acetyl-CoA: step 1/1. Its function is as follows. Component of the acetyl coenzyme A carboxylase (ACC) complex. Biotin carboxylase (BC) catalyzes the carboxylation of biotin on its carrier protein (BCCP) and then the CO(2) group is transferred by the transcarboxylase to acetyl-CoA to form malonyl-CoA. The sequence is that of Acetyl-coenzyme A carboxylase carboxyl transferase subunit beta from Bartonella bacilliformis (strain ATCC 35685 / KC583 / Herrer 020/F12,63).